A 164-amino-acid chain; its full sequence is NADH-quinone oxidoreductase subunit I (164 aa).

2 4Fe-4S ferredoxin-type domains span residues 55 to 85 (LRRY…IDAE) and 95 to 124 (TRYD…EGPN). 8 residues coordinate [4Fe-4S] cluster: Cys65, Cys68, Cys71, Cys75, Cys104, Cys107, Cys110, and Cys114.

It belongs to the complex I 23 kDa subunit family. NDH-1 is composed of 14 different subunits. Subunits NuoA, H, J, K, L, M, N constitute the membrane sector of the complex. Requires [4Fe-4S] cluster as cofactor.

The protein localises to the cell inner membrane. It catalyses the reaction a quinone + NADH + 5 H(+)(in) = a quinol + NAD(+) + 4 H(+)(out). Functionally, NDH-1 shuttles electrons from NADH, via FMN and iron-sulfur (Fe-S) centers, to quinones in the respiratory chain. The immediate electron acceptor for the enzyme in this species is believed to be ubiquinone. Couples the redox reaction to proton translocation (for every two electrons transferred, four hydrogen ions are translocated across the cytoplasmic membrane), and thus conserves the redox energy in a proton gradient. In Dinoroseobacter shibae (strain DSM 16493 / NCIMB 14021 / DFL 12), this protein is NADH-quinone oxidoreductase subunit I.